Consider the following 190-residue polypeptide: Glucose-6-phosphate isomerase (190 aa).

The Fe cation site is built by His-89, His-91, Glu-98, and His-137.

This sequence belongs to the archaeal-type GPI family. Homodimer. Fe cation is required as a cofactor.

The protein resides in the cytoplasm. It catalyses the reaction alpha-D-glucose 6-phosphate = beta-D-fructose 6-phosphate. It functions in the pathway carbohydrate degradation; glycolysis; D-glyceraldehyde 3-phosphate and glycerone phosphate from D-glucose: step 2/4. Inhibited by mannose 6-phosphate, fructose 1-phosphate and fructose 1,6-bisphosphate. Its activity is also inhibited by Cobalt (II) ions &lt; EDTA &lt; nickel (II) ions &lt; zinc (II) ions &lt;&lt; cadmium (II) ions &lt; copper (II) ions. Sodium and potassium ions and manganese ions show little or no effect on activity. This Thermococcus litoralis protein is Glucose-6-phosphate isomerase (pgiA).